Here is a 459-residue protein sequence, read N- to C-terminus: Cysteine--tRNA ligase (459 aa).

Cysteine 28 is a binding site for Zn(2+). Positions 30-40 (VTIYDLCHIGH) match the 'HIGH' region motif. Zn(2+)-binding residues include cysteine 209, histidine 234, and glutamate 238. A 'KMSKS' region motif is present at residues 266 to 270 (KMSKS). Lysine 269 serves as a coordination point for ATP.

It belongs to the class-I aminoacyl-tRNA synthetase family. As to quaternary structure, monomer. It depends on Zn(2+) as a cofactor.

The protein localises to the cytoplasm. It catalyses the reaction tRNA(Cys) + L-cysteine + ATP = L-cysteinyl-tRNA(Cys) + AMP + diphosphate. The polypeptide is Cysteine--tRNA ligase (Shewanella pealeana (strain ATCC 700345 / ANG-SQ1)).